The following is a 300-amino-acid chain: Acetaldehyde dehydrogenase 3 (300 aa).

Serine 11–isoleucine 14 provides a ligand contact to NAD(+). Catalysis depends on cysteine 126, which acts as the Acyl-thioester intermediate. NAD(+) contacts are provided by residues serine 157–asparagine 165 and asparagine 276.

The protein belongs to the acetaldehyde dehydrogenase family.

The catalysed reaction is acetaldehyde + NAD(+) + CoA = acetyl-CoA + NADH + H(+). The protein is Acetaldehyde dehydrogenase 3 of Rhodococcus opacus (strain B4).